A 651-amino-acid chain; its full sequence is Endoplasmic reticulum chaperone BiP (651 aa).

The N-terminal stretch at 1 to 20 (MGLSTYVGIFLLCILTLSRC) is a signal peptide. Residues 36 to 39 (GTTY), Lys96, 226 to 228 (GGT), 292 to 299 (EKAKRTLS), and 363 to 366 (GSTR) contribute to the ATP site. A nucleotide-binding (NBD) region spans residues 125–279 (KPYMKVQVGS…KKKEGKDITK (155 aa)). The substrate-binding (SBD) stretch occupies residues 399–499 (VQAGVISGVE…PRGLPQIEVT (101 aa)). Residues 648–651 (KEEL) carry the Prevents secretion from ER motif.

It belongs to the heat shock protein 70 family.

It localises to the endoplasmic reticulum lumen. The enzyme catalyses ATP + H2O = ADP + phosphate + H(+). Its activity is regulated as follows. The chaperone activity is regulated by ATP-induced allosteric coupling of the nucleotide-binding (NBD) and substrate-binding (SBD) domains. In the ADP-bound and nucleotide-free (apo) states, the two domains have little interaction. In contrast, in the ATP-bound state the two domains are tightly coupled, which results in drastically accelerated kinetics in both binding and release of polypeptide substrates. J domain-containing co-chaperones stimulate the ATPase activity and are required for efficient substrate recognition. Endoplasmic reticulum chaperone that plays a key role in protein folding and quality control in the endoplasmic reticulum lumen. Involved in the correct folding of proteins and degradation of misfolded proteins. Acts as a key repressor of the unfolded protein response (UPR). The sequence is that of Endoplasmic reticulum chaperone BiP from Echinococcus granulosus (Hydatid tapeworm).